We begin with the raw amino-acid sequence, 118 residues long: MNTYAFNRELRLLTPEHYQNVFQQAHRAGSPHFTIIARNNKLSHPRLGLAVPKKQIKTAVGRNRFKRLARESFRNNQHQLPNKDFVVIAKKSAQDLSNEELFKLFDKLWHRLSRPSRG.

It belongs to the RnpA family. Consists of a catalytic RNA component (M1 or rnpB) and a protein subunit.

It carries out the reaction Endonucleolytic cleavage of RNA, removing 5'-extranucleotides from tRNA precursor.. RNaseP catalyzes the removal of the 5'-leader sequence from pre-tRNA to produce the mature 5'-terminus. It can also cleave other RNA substrates such as 4.5S RNA. The protein component plays an auxiliary but essential role in vivo by binding to the 5'-leader sequence and broadening the substrate specificity of the ribozyme. In Vibrio campbellii (strain ATCC BAA-1116), this protein is Ribonuclease P protein component.